Reading from the N-terminus, the 251-residue chain is Probable transcriptional regulatory protein Cgl1663/cg1872 (251 aa).

Positions 1-22 (MSGHSKWATTKHKKAANDAKRG) are disordered.

This sequence belongs to the TACO1 family.

Its subcellular location is the cytoplasm. This Corynebacterium glutamicum (strain ATCC 13032 / DSM 20300 / JCM 1318 / BCRC 11384 / CCUG 27702 / LMG 3730 / NBRC 12168 / NCIMB 10025 / NRRL B-2784 / 534) protein is Probable transcriptional regulatory protein Cgl1663/cg1872.